A 614-amino-acid polypeptide reads, in one-letter code: UvrABC system protein C (614 aa).

The 78-residue stretch at 12–89 folds into the GIY-YIG domain; sequence DKPGVYLFRG…IKEHRPRYNV (78 aa). The UVR domain maps to 198-233; sequence ADLVRGLARKMEAAAANLEFERAAELRDQLRAVEQV.

The protein belongs to the UvrC family. As to quaternary structure, interacts with UvrB in an incision complex.

The protein resides in the cytoplasm. Its function is as follows. The UvrABC repair system catalyzes the recognition and processing of DNA lesions. UvrC both incises the 5' and 3' sides of the lesion. The N-terminal half is responsible for the 3' incision and the C-terminal half is responsible for the 5' incision. The sequence is that of UvrABC system protein C from Desulforudis audaxviator (strain MP104C).